The primary structure comprises 254 residues: PHD finger protein ALFIN-LIKE 8 (254 aa).

Residues 137-194 (GTAKKQSKEKTPKTSGKSNKSGTKPSRQPEPNSRGPKMPPPKDEDDSGGEEEEEEEDH) are disordered. The segment covering 149–162 (KTSGKSNKSGTKPS) has biased composition (low complexity). Residues 179-194 (DEDDSGGEEEEEEEDH) show a composition bias toward acidic residues. The PHD-type zinc-finger motif lies at 196 to 248 (NTLCGACGDNYGQDEFWICCDACETWFHGKCVKITPAKAEHIKHYKCPNCSSS).

This sequence belongs to the Alfin family. In terms of assembly, interacts with H3K4me3 and to a lesser extent with H3K4me2.

The protein resides in the nucleus. Functionally, histone-binding component that specifically recognizes H3 tails trimethylated on 'Lys-4' (H3K4me3), which mark transcription start sites of virtually all active genes. This chain is PHD finger protein ALFIN-LIKE 8, found in Oryza sativa subsp. japonica (Rice).